The following is a 437-amino-acid chain: Cytochrome b (437 aa).

Residues 45–65 traverse the membrane as a helical segment; that stretch reads WIWGIVLAFTLVLQIVTGIVL. Heme b-binding residues include His97 and His111. Transmembrane regions (helical) follow at residues 100 to 120, 129 to 149, 156 to 176, 194 to 214, 248 to 268, 298 to 318, 330 to 350, 365 to 385, and 391 to 411; these read GASL…YYGS, WIVG…GYVL, FWGA…GPSI, FFSL…IHIW, FVIK…AVVA, FLPF…VILV, FFGV…PWLD, MWFW…AMPT, and WISL…LPLL. 2 residues coordinate heme b: His198 and His212.

It belongs to the cytochrome b family. In terms of assembly, the main subunits of complex b-c1 are: cytochrome b, cytochrome c1 and the Rieske protein. Heme b is required as a cofactor.

Its subcellular location is the cell membrane. In terms of biological role, component of the ubiquinol-cytochrome c reductase complex (complex III or cytochrome b-c1 complex), which is a respiratory chain that generates an electrochemical potential coupled to ATP synthesis. The protein is Cytochrome b (petB) of Rhodobacter capsulatus (Rhodopseudomonas capsulata).